The chain runs to 47 residues: Glyceraldehyde-3-phosphate dehydrogenase, cytosolic (47 aa).

This sequence belongs to the glyceraldehyde-3-phosphate dehydrogenase family. In terms of assembly, homotetramer.

It localises to the cytoplasm. The enzyme catalyses D-glyceraldehyde 3-phosphate + phosphate + NAD(+) = (2R)-3-phospho-glyceroyl phosphate + NADH + H(+). The protein operates within carbohydrate degradation; glycolysis; pyruvate from D-glyceraldehyde 3-phosphate: step 1/5. The sequence is that of Glyceraldehyde-3-phosphate dehydrogenase, cytosolic from Pseudotsuga menziesii (Douglas-fir).